Reading from the N-terminus, the 418-residue chain is Putative competence-damage inducible protein (418 aa).

It belongs to the CinA family.

The sequence is that of Putative competence-damage inducible protein from Streptococcus pneumoniae (strain CGSP14).